Consider the following 182-residue polypeptide: Ribulose bisphosphate carboxylase small subunit, chloroplastic 4 (182 aa).

The transit peptide at 1–41 (MAATMMNKTVVLSKGCTKPSAVPKVSINRKGFLNTAMNKKR) directs the protein to the chloroplast.

It belongs to the RuBisCO small chain family. Heterohexadecamer of 8 large and 8 small subunits.

The protein localises to the plastid. The protein resides in the chloroplast. Its function is as follows. RuBisCO catalyzes two reactions: the carboxylation of D-ribulose 1,5-bisphosphate, the primary event in carbon dioxide fixation, as well as the oxidative fragmentation of the pentose substrate. Both reactions occur simultaneously and in competition at the same active site. Although the small subunit is not catalytic it is essential for maximal activity. This chain is Ribulose bisphosphate carboxylase small subunit, chloroplastic 4, found in Acetabularia peniculus (Green alga).